A 95-amino-acid chain; its full sequence is Small ribosomal subunit protein uS19 (95 aa).

It belongs to the universal ribosomal protein uS19 family.

In terms of biological role, protein S19 forms a complex with S13 that binds strongly to the 16S ribosomal RNA. The chain is Small ribosomal subunit protein uS19 from Thermosipho africanus (strain TCF52B).